An 891-amino-acid chain; its full sequence is Alanine--tRNA ligase (891 aa).

H564, H568, C677, and H681 together coordinate Zn(2+).

This sequence belongs to the class-II aminoacyl-tRNA synthetase family. The cofactor is Zn(2+).

It localises to the cytoplasm. The enzyme catalyses tRNA(Ala) + L-alanine + ATP = L-alanyl-tRNA(Ala) + AMP + diphosphate. Functionally, catalyzes the attachment of alanine to tRNA(Ala) in a two-step reaction: alanine is first activated by ATP to form Ala-AMP and then transferred to the acceptor end of tRNA(Ala). Also edits incorrectly charged Ser-tRNA(Ala) and Gly-tRNA(Ala) via its editing domain. In Rhodopseudomonas palustris (strain BisA53), this protein is Alanine--tRNA ligase.